Here is a 115-residue protein sequence, read N- to C-terminus: Phosphoribosyl-ATP pyrophosphatase (115 aa).

It belongs to the PRA-PH family.

The protein resides in the cytoplasm. The enzyme catalyses 1-(5-phospho-beta-D-ribosyl)-ATP + H2O = 1-(5-phospho-beta-D-ribosyl)-5'-AMP + diphosphate + H(+). It participates in amino-acid biosynthesis; L-histidine biosynthesis; L-histidine from 5-phospho-alpha-D-ribose 1-diphosphate: step 2/9. In Saccharophagus degradans (strain 2-40 / ATCC 43961 / DSM 17024), this protein is Phosphoribosyl-ATP pyrophosphatase.